We begin with the raw amino-acid sequence, 304 residues long: MKLNLAVKIGQLDMINPVTTASGTFGYGQEYSPYVDLNQLGAIVVKGTTLEPREGNPTPRLVETPSGILNSIGLQNSGVDYLLEHYVPFFKKLQTNVIVNISGNTAEEYGQLAARLDEADGIAALEVNISCPNVKKGGMAFGGDFRTAAEVTKVVKNSTALPVIVKLSPNVTDIAEIARAVEGAGADGLSVINTLLGMAIDVRKRKPVLGNTMGGLSGPAVKPVALRAVWQVYKAVHIPIIGMGGIMNATDALEFILAGAQAVSVGTANFVNPYATKEIIQGMEKYLMENGIGDINELVGAAHL.

FMN contacts are provided by residues serine 22 and 46–47 (KG). Substrate-binding positions include lysine 46 and 70-74 (NSIGL). Asparagine 100 and asparagine 128 together coordinate FMN. Asparagine 128 is a binding site for substrate. Catalysis depends on cysteine 131, which acts as the Nucleophile. Residues lysine 166 and isoleucine 192 each contribute to the FMN site. 193–194 (NT) provides a ligand contact to substrate. Residues glycine 218, 244–245 (GG), and 266–267 (GT) each bind FMN.

The protein belongs to the dihydroorotate dehydrogenase family. Type 1 subfamily. Heterotetramer of 2 PyrK and 2 PyrD type B subunits. However, the metal reductase complex seems to be composed of a heterooctamer of 4 PyrK and 4 PyrD subunits. Requires FMN as cofactor.

It is found in the cytoplasm. It catalyses the reaction (S)-dihydroorotate + NAD(+) = orotate + NADH + H(+). It participates in pyrimidine metabolism; UMP biosynthesis via de novo pathway; orotate from (S)-dihydroorotate (NAD(+) route): step 1/1. Its function is as follows. Catalyzes the conversion of dihydroorotate to orotate with NAD(+) as electron acceptor. Together with PyrK, also forms a metal reductase complex able to reduce Fe(III)-chelates to Fe(II)-chelates, as well as soluble Cr(VI) and U(VI), using NADH as electron donor. To a lesser extent, can also use NADPH as an electron donor. Is unable to reduce riboflavin and FMN with NADH as electron donor. May have an in vivo role in metal reduction in D.reducens, which is an organism capable of reducing contaminant heavy metals and radionuclides. The sequence is that of Dihydroorotate dehydrogenase B (NAD(+)), catalytic subunit (pyrD) from Desulforamulus reducens (strain ATCC BAA-1160 / DSM 100696 / MI-1) (Desulfotomaculum reducens).